The primary structure comprises 188 residues: GMP synthase [glutamine-hydrolyzing] subunit A (188 aa).

One can recognise a Glutamine amidotransferase type-1 domain in the interval 1–188 (MIIIMDNGGQ…RNFAKICGEL (188 aa)). Cys-78 (nucleophile) is an active-site residue. Residues His-165 and Glu-167 contribute to the active site.

Heterodimer composed of a glutamine amidotransferase subunit (A) and a GMP-binding subunit (B).

The catalysed reaction is XMP + L-glutamine + ATP + H2O = GMP + L-glutamate + AMP + diphosphate + 2 H(+). Its pathway is purine metabolism; GMP biosynthesis; GMP from XMP (L-Gln route): step 1/1. In terms of biological role, catalyzes the synthesis of GMP from XMP. The protein is GMP synthase [glutamine-hydrolyzing] subunit A of Pyrococcus furiosus (strain ATCC 43587 / DSM 3638 / JCM 8422 / Vc1).